A 286-amino-acid chain; its full sequence is NAD kinase (286 aa).

D74 serves as the catalytic Proton acceptor. NAD(+) contacts are provided by residues D74–G75, N148–D149, D178, A186, T189–S194, and Q244.

Belongs to the NAD kinase family. The cofactor is a divalent metal cation.

It localises to the cytoplasm. The catalysed reaction is NAD(+) + ATP = ADP + NADP(+) + H(+). In terms of biological role, involved in the regulation of the intracellular balance of NAD and NADP, and is a key enzyme in the biosynthesis of NADP. Catalyzes specifically the phosphorylation on 2'-hydroxyl of the adenosine moiety of NAD to yield NADP. This chain is NAD kinase, found in Campylobacter jejuni subsp. doylei (strain ATCC BAA-1458 / RM4099 / 269.97).